A 77-amino-acid polypeptide reads, in one-letter code: Acyl carrier protein (77 aa).

A Carrier domain is found at 2-77 (ADTLSRITKI…DVVEYIEGRQ (76 aa)). Ser-37 carries the post-translational modification O-(pantetheine 4'-phosphoryl)serine.

It belongs to the acyl carrier protein (ACP) family. 4'-phosphopantetheine is transferred from CoA to a specific serine of apo-ACP by AcpS. This modification is essential for activity because fatty acids are bound in thioester linkage to the sulfhydryl of the prosthetic group.

It is found in the cytoplasm. It participates in lipid metabolism; fatty acid biosynthesis. Its function is as follows. Carrier of the growing fatty acid chain in fatty acid biosynthesis. The polypeptide is Acyl carrier protein (Halalkalibacterium halodurans (strain ATCC BAA-125 / DSM 18197 / FERM 7344 / JCM 9153 / C-125) (Bacillus halodurans)).